Here is a 1938-residue protein sequence, read N- to C-terminus: Myosin-4 (1938 aa).

The Myosin N-terminal SH3-like domain maps to 33–82; the sequence is DAKSSVFVADPKESFVKATVQSREGGKVTAKTEAGATVTVKEDQVFPMNP. A Phosphoserine modification is found at S36. Phosphothreonine is present on residues T64 and T69. The region spanning 86 to 781 is the Myosin motor domain; that stretch reads DKIEDMAMMT…LLGLLEEMRD (696 aa). Residue 179–186 participates in ATP binding; it reads GESGAGKT. A Phosphotyrosine modification is found at Y389. S392 carries the phosphoserine modification. T419 is modified (phosphothreonine). Residue Y424 is modified to Phosphotyrosine. An actin-binding region spans residues 658–680; sequence LNKLMTNLRSTHPHFVRCIIPNE. Residue H756 is modified to Pros-methylhistidine. Residues 760–774 form an actin-binding region; sequence KFGHTKVFFKAGLLG. The IQ domain occupies 784-813; sequence LAQLITRTQAMCRGFLARVEYKKMVERRES. Positions 845 to 1926 form a coiled coil; that stretch reads SAETEKEMAN…ESQVNKLRVK (1082 aa). Residues S1091, S1095, S1161, and S1236 each carry the phosphoserine modification. Position 1240 is a phosphothreonine (T1240). S1242 bears the Phosphoserine mark. T1254 carries the post-translational modification Phosphothreonine. At S1260 the chain carries Phosphoserine. T1264 bears the Phosphothreonine mark. At S1277 the chain carries Phosphoserine. The residue at position 1285 (T1285) is a Phosphothreonine. Phosphoserine is present on residues S1287, S1291, S1302, and S1305. A Phosphotyrosine modification is found at Y1463. T1466 is subject to Phosphothreonine. S1473 is subject to Phosphoserine. Y1491 carries the phosphotyrosine modification. A Phosphoserine modification is found at S1494. A Phosphothreonine modification is found at T1500. At S1513 the chain carries Phosphoserine. T1516 is subject to Phosphothreonine. Phosphoserine is present on residues S1541, S1553, S1573, S1599, S1602, S1713, and S1725. T1729 and T1735 each carry phosphothreonine. S1738 bears the Phosphoserine mark.

Belongs to the TRAFAC class myosin-kinesin ATPase superfamily. Myosin family. In terms of assembly, muscle myosin is a hexameric protein that consists of 2 heavy chain subunits (MHC), 2 alkali light chain subunits (MLC) and 2 regulatory light chain subunits (MLC-2).

The protein resides in the cytoplasm. Its subcellular location is the myofibril. Functionally, muscle contraction. The chain is Myosin-4 (MYH4) from Oryctolagus cuniculus (Rabbit).